Consider the following 632-residue polypeptide: tRNA uridine 5-carboxymethylaminomethyl modification enzyme MnmG (632 aa).

15-20 (GAGHAG) provides a ligand contact to FAD. The interval 205-231 (PRVDGNTIDYSKTQEEPGDKEPRHFSY) is disordered. The span at 216-228 (KTQEEPGDKEPRH) shows a compositional bias: basic and acidic residues. 276-290 (GPRYCPSIEDKVVRF) is a binding site for NAD(+).

It belongs to the MnmG family. As to quaternary structure, homodimer. Heterotetramer of two MnmE and two MnmG subunits. FAD serves as cofactor.

The protein localises to the cytoplasm. Its function is as follows. NAD-binding protein involved in the addition of a carboxymethylaminomethyl (cmnm) group at the wobble position (U34) of certain tRNAs, forming tRNA-cmnm(5)s(2)U34. The sequence is that of tRNA uridine 5-carboxymethylaminomethyl modification enzyme MnmG from Lactobacillus johnsonii (strain CNCM I-12250 / La1 / NCC 533).